An 82-amino-acid chain; its full sequence is uncharacterized protein (82 aa).

3 helical membrane passes run 4–26 (LDIA…TCIC), 31–48 (LMPM…FTIF), and 52–74 (FLGW…LIVV).

Its subcellular location is the cell membrane. This is an uncharacterized protein from Bacillus subtilis (strain 168).